We begin with the raw amino-acid sequence, 509 residues long: Light-independent protochlorophyllide reductase subunit B (509 aa).

[4Fe-4S] cluster is bound at residue D36. The active-site Proton donor is the D298. A substrate-binding site is contributed by 433 to 434 (GM).

The protein belongs to the ChlB/BchB/BchZ family. As to quaternary structure, protochlorophyllide reductase is composed of three subunits; ChlL, ChlN and ChlB. Forms a heterotetramer of two ChlB and two ChlN subunits. Requires [4Fe-4S] cluster as cofactor.

It localises to the plastid. Its subcellular location is the chloroplast. The enzyme catalyses chlorophyllide a + oxidized 2[4Fe-4S]-[ferredoxin] + 2 ADP + 2 phosphate = protochlorophyllide a + reduced 2[4Fe-4S]-[ferredoxin] + 2 ATP + 2 H2O. Its pathway is porphyrin-containing compound metabolism; chlorophyll biosynthesis (light-independent). Functionally, component of the dark-operative protochlorophyllide reductase (DPOR) that uses Mg-ATP and reduced ferredoxin to reduce ring D of protochlorophyllide (Pchlide) to form chlorophyllide a (Chlide). This reaction is light-independent. The NB-protein (ChlN-ChlB) is the catalytic component of the complex. In Ephedra altissima (High-climbing jointfir), this protein is Light-independent protochlorophyllide reductase subunit B.